The chain runs to 621 residues: Ubiquitin carboxyl-terminal hydrolase MINDY-2 (621 aa).

2 disordered regions span residues 1–106 (MESS…RGQY) and 119–179 (VGHE…LESF). S94 is modified (phosphoserine). A compositionally biased stretch (low complexity) spans 145-163 (AAGSEEPSSAGGLSSSCSD). C266 serves as the catalytic Nucleophile. The active-site Proton acceptor is H448. The segment at 507-559 (GQQDQIDQDYLMALSLQQEQQSQEINWEQIPEGISDLELAKKLQEEEDRRASQ) is ubiquitin-binding domain (UBD). The segment at 556–621 (RASQYYQEQE…EKEKNSCVIL (66 aa)) is disordered. Over residues 558-591 (SQYYQEQEQAAAAAAAASTQAQQGQPAQASPSSG) the composition is skewed to low complexity. Residues 597 to 621 (SERKRKEPREKDKEKEKEKNSCVIL) are compositionally biased toward basic and acidic residues.

It belongs to the MINDY deubiquitinase family. FAM63 subfamily.

It carries out the reaction Thiol-dependent hydrolysis of ester, thioester, amide, peptide and isopeptide bonds formed by the C-terminal Gly of ubiquitin (a 76-residue protein attached to proteins as an intracellular targeting signal).. Hydrolase that can remove 'Lys-48'-linked conjugated ubiquitin from proteins. Binds to polyubiquitin chains of different linkage types, including 'Lys-6', 'Lys-11', 'Lys-29', 'Lys-33', 'Lys-48' and 'Lys-63'. May play a regulatory role at the level of protein turnover. This chain is Ubiquitin carboxyl-terminal hydrolase MINDY-2, found in Homo sapiens (Human).